Consider the following 122-residue polypeptide: Large ribosomal subunit protein bL19c (122 aa).

The protein belongs to the bacterial ribosomal protein bL19 family.

It localises to the plastid. Its subcellular location is the chloroplast. This chain is Large ribosomal subunit protein bL19c (rpl19), found in Rhodomonas salina (Cryptomonas salina).